The sequence spans 95 residues: Aspartyl/glutamyl-tRNA(Asn/Gln) amidotransferase subunit C (95 aa).

Belongs to the GatC family. In terms of assembly, heterotrimer of A, B and C subunits.

It catalyses the reaction L-glutamyl-tRNA(Gln) + L-glutamine + ATP + H2O = L-glutaminyl-tRNA(Gln) + L-glutamate + ADP + phosphate + H(+). The catalysed reaction is L-aspartyl-tRNA(Asn) + L-glutamine + ATP + H2O = L-asparaginyl-tRNA(Asn) + L-glutamate + ADP + phosphate + 2 H(+). Its function is as follows. Allows the formation of correctly charged Asn-tRNA(Asn) or Gln-tRNA(Gln) through the transamidation of misacylated Asp-tRNA(Asn) or Glu-tRNA(Gln) in organisms which lack either or both of asparaginyl-tRNA or glutaminyl-tRNA synthetases. The reaction takes place in the presence of glutamine and ATP through an activated phospho-Asp-tRNA(Asn) or phospho-Glu-tRNA(Gln). This chain is Aspartyl/glutamyl-tRNA(Asn/Gln) amidotransferase subunit C, found in Paracoccus denitrificans (strain Pd 1222).